Here is a 1107-residue protein sequence, read N- to C-terminus: Copine family protein 1 (1107 aa).

Residues 1 to 22 lie on the Extracellular side of the membrane; the sequence is MVFDARLGYDPDEWEECPEPEH. A helical membrane pass occupies residues 23 to 45; sequence FLVFSGFTRYMLTFAAIAFVYYF. Residues 46–1107 lie on the Cytoplasmic side of the membrane; it reads FKLLDDKNKK…IRREMMHNPL (1062 aa). A coiled-coil region spans residues 67–124; the sequence is VESVLAKAGDKLHDVKEQVQQHIPESAEELMREADQYLKEQAHSVQNNVHQFAEQAAN. Residues 478 to 488 show a composition bias toward low complexity; that stretch reads QLQQNQQQHQQ. Disordered stretches follow at residues 478-501 and 673-698; these read QLQQ…TADS and HEPE…SRQV. The segment covering 492–501 has biased composition (basic and acidic residues); that stretch reads IDRRRTTADS. Residues 687 to 698 are compositionally biased toward polar residues; it reads KNPSFEATSRQV. Positions 863 to 1023 constitute a VWFA domain; the sequence is NLIFGIDYTA…LSIIVVGVGD (161 aa).

This sequence belongs to the copine family. May interact (via VWFA domain) with unc-89 (via Ig-like C2-type 1-3) and unc-96 (via C-terminus); cpna-1 binding sites for unc-89 and unc-96 are different. May interact with pat-6. May interact with lim-9 (via LIM domains) and with scpl-1 (via FCP1 homology domain). Expressed in body wall muscles (at protein level).

Its subcellular location is the basal cell membrane. It is found in the cytoplasm. It localises to the myofibril. The protein localises to the sarcomere. The protein resides in the m line. In terms of biological role, involved in the assembly of dense bodies and M lines during body wall muscle development. Acts by recruiting downstream of integrin-associated protein pat-6/actopaxin several dense bodies and M line components including unc-89, lim-9, scpl-1 and unc-96 to integrin-mediated attachment sites. The protein is Copine family protein 1 of Caenorhabditis elegans.